We begin with the raw amino-acid sequence, 480 residues long: Methylenetetrahydrofolate--tRNA-(uracil-5-)-methyltransferase TrmFO (480 aa).

15–20 (GGGLAG) lines the FAD pocket.

It belongs to the MnmG family. TrmFO subfamily. Requires FAD as cofactor.

It localises to the cytoplasm. The enzyme catalyses uridine(54) in tRNA + (6R)-5,10-methylene-5,6,7,8-tetrahydrofolate + NADH + H(+) = 5-methyluridine(54) in tRNA + (6S)-5,6,7,8-tetrahydrofolate + NAD(+). It catalyses the reaction uridine(54) in tRNA + (6R)-5,10-methylene-5,6,7,8-tetrahydrofolate + NADPH + H(+) = 5-methyluridine(54) in tRNA + (6S)-5,6,7,8-tetrahydrofolate + NADP(+). Catalyzes the folate-dependent formation of 5-methyl-uridine at position 54 (M-5-U54) in all tRNAs. The chain is Methylenetetrahydrofolate--tRNA-(uracil-5-)-methyltransferase TrmFO from Caulobacter sp. (strain K31).